A 143-amino-acid chain; its full sequence is Large ribosomal subunit protein uL11 (143 aa).

It belongs to the universal ribosomal protein uL11 family. As to quaternary structure, part of the ribosomal stalk of the 50S ribosomal subunit. Interacts with L10 and the large rRNA to form the base of the stalk. L10 forms an elongated spine to which L12 dimers bind in a sequential fashion forming a multimeric L10(L12)X complex. One or more lysine residues are methylated.

In terms of biological role, forms part of the ribosomal stalk which helps the ribosome interact with GTP-bound translation factors. The sequence is that of Large ribosomal subunit protein uL11 from Alkalilimnicola ehrlichii (strain ATCC BAA-1101 / DSM 17681 / MLHE-1).